We begin with the raw amino-acid sequence, 291 residues long: Mitochondrial thiamine pyrophosphate carrier 1 (291 aa).

Transmembrane regions (helical) follow at residues 12 to 31, 83 to 99, 120 to 141, 167 to 191, 214 to 230, and 265 to 282; these read GATA…GAVA, IMYI…YSMF, SLIV…FDLL, GGLA…GLMF, FCGF…TFPL, and GFGI…VSLF. 3 Solcar repeats span residues 15 to 102, 115 to 200, and 207 to 290; these read ASVY…FSKA, RPSN…AREV, and NIPF…VLNG.

This sequence belongs to the mitochondrial carrier (TC 2.A.29) family.

Its subcellular location is the mitochondrion inner membrane. Its function is as follows. Mitochondrial transporter that mediates uptake of thiamine pyrophosphate (ThPP) into mitochondria. The protein is Mitochondrial thiamine pyrophosphate carrier 1 (TPC1) of Meyerozyma guilliermondii (strain ATCC 6260 / CBS 566 / DSM 6381 / JCM 1539 / NBRC 10279 / NRRL Y-324) (Yeast).